Here is a 403-residue protein sequence, read N- to C-terminus: Probable tRNA sulfurtransferase (403 aa).

Positions 60–165 constitute a THUMP domain; it reads QLAEERLKPI…KEGVFLSCRT (106 aa). Residues 183-184, 208-209, Arg-265, Gly-287, and Gln-296 contribute to the ATP site; these read ML and HF.

This sequence belongs to the ThiI family.

It localises to the cytoplasm. It carries out the reaction [ThiI sulfur-carrier protein]-S-sulfanyl-L-cysteine + a uridine in tRNA + 2 reduced [2Fe-2S]-[ferredoxin] + ATP + H(+) = [ThiI sulfur-carrier protein]-L-cysteine + a 4-thiouridine in tRNA + 2 oxidized [2Fe-2S]-[ferredoxin] + AMP + diphosphate. The catalysed reaction is [ThiS sulfur-carrier protein]-C-terminal Gly-Gly-AMP + S-sulfanyl-L-cysteinyl-[cysteine desulfurase] + AH2 = [ThiS sulfur-carrier protein]-C-terminal-Gly-aminoethanethioate + L-cysteinyl-[cysteine desulfurase] + A + AMP + 2 H(+). The protein operates within cofactor biosynthesis; thiamine diphosphate biosynthesis. Catalyzes the ATP-dependent transfer of a sulfur to tRNA to produce 4-thiouridine in position 8 of tRNAs, which functions as a near-UV photosensor. Also catalyzes the transfer of sulfur to the sulfur carrier protein ThiS, forming ThiS-thiocarboxylate. This is a step in the synthesis of thiazole, in the thiamine biosynthesis pathway. The sulfur is donated as persulfide by IscS. This is Probable tRNA sulfurtransferase from Listeria innocua serovar 6a (strain ATCC BAA-680 / CLIP 11262).